We begin with the raw amino-acid sequence, 470 residues long: Methylenetetrahydrofolate--tRNA-(uracil-5-)-methyltransferase TrmFO (470 aa).

10-15 (GAGLAG) provides a ligand contact to FAD.

This sequence belongs to the MnmG family. TrmFO subfamily. Requires FAD as cofactor.

The protein localises to the cytoplasm. The enzyme catalyses uridine(54) in tRNA + (6R)-5,10-methylene-5,6,7,8-tetrahydrofolate + NADH + H(+) = 5-methyluridine(54) in tRNA + (6S)-5,6,7,8-tetrahydrofolate + NAD(+). It catalyses the reaction uridine(54) in tRNA + (6R)-5,10-methylene-5,6,7,8-tetrahydrofolate + NADPH + H(+) = 5-methyluridine(54) in tRNA + (6S)-5,6,7,8-tetrahydrofolate + NADP(+). Functionally, catalyzes the folate-dependent formation of 5-methyl-uridine at position 54 (M-5-U54) in all tRNAs. This chain is Methylenetetrahydrofolate--tRNA-(uracil-5-)-methyltransferase TrmFO, found in Prochlorococcus marinus subsp. pastoris (strain CCMP1986 / NIES-2087 / MED4).